Consider the following 85-residue polypeptide: Beta-defensin 18 (85 aa).

A signal peptide spans 1–23 (MQSAMKLFFIFLIFVFSVSCGPS). 3 disulfides stabilise this stretch: Cys39/Cys65, Cys46/Cys60, and Cys50/Cys66.

It belongs to the beta-defensin family.

The protein resides in the secreted. Its function is as follows. Has antibacterial activity. The chain is Beta-defensin 18 (Defb18) from Rattus norvegicus (Rat).